We begin with the raw amino-acid sequence, 219 residues long: 2,5-diamino-6-ribosylamino-4(3H)-pyrimidinone 5'-phosphate reductase (219 aa).

NADP(+) is bound by residues Thr52, Asp56, 87–90 (SRCR), Val134, and 156–159 (GGTL).

This sequence belongs to the HTP reductase family. As to quaternary structure, homodimer.

The enzyme catalyses 2,5-diamino-6-(1-D-ribitylamino)pyrimidin-4(3H)-one 5'-phosphate + NADP(+) = 2,5-diamino-6-(1-D-ribosylamino)pyrimidin-4(3H)-one 5'-phosphate + NADPH + H(+). It carries out the reaction 2,5-diamino-6-(1-D-ribitylamino)pyrimidin-4(3H)-one 5'-phosphate + NAD(+) = 2,5-diamino-6-(1-D-ribosylamino)pyrimidin-4(3H)-one 5'-phosphate + NADH + H(+). It functions in the pathway cofactor biosynthesis; riboflavin biosynthesis. In terms of biological role, catalyzes an early step in riboflavin biosynthesis, the NADPH-dependent reduction of the ribose side chain of 2,5-diamino-6-ribosylamino-4(3H)-pyrimidinone 5'-phosphate, yielding 2,5-diamino-6-ribitylamino-4(3H)-pyrimidinone 5'-phosphate. This is 2,5-diamino-6-ribosylamino-4(3H)-pyrimidinone 5'-phosphate reductase from Archaeoglobus fulgidus (strain ATCC 49558 / DSM 4304 / JCM 9628 / NBRC 100126 / VC-16).